We begin with the raw amino-acid sequence, 249 residues long: Phosphonates import ATP-binding protein PhnC (249 aa).

The ABC transporter domain maps to 2 to 246 (IEFKKVEKVW…KLNESKLEEI (245 aa)). 35 to 42 (GLSGAGKT) contacts ATP.

This sequence belongs to the ABC transporter superfamily. Phosphonates importer (TC 3.A.1.9.1) family. As to quaternary structure, the complex is composed of two ATP-binding proteins (PhnC), two transmembrane proteins (PhnE) and a solute-binding protein (PhnD).

The protein localises to the cell membrane. The enzyme catalyses phosphonate(out) + ATP + H2O = phosphonate(in) + ADP + phosphate + H(+). Its function is as follows. Part of the ABC transporter complex PhnCDE involved in phosphonates import. Responsible for energy coupling to the transport system. In Mesoplasma florum (strain ATCC 33453 / NBRC 100688 / NCTC 11704 / L1) (Acholeplasma florum), this protein is Phosphonates import ATP-binding protein PhnC.